The following is a 218-amino-acid chain: Small ribosomal subunit protein uS3c (218 aa).

In terms of domain architecture, KH type-2 spans 47 to 120; the sequence is VRTHIKSSSN…KLHIAIEKVA (74 aa).

This sequence belongs to the universal ribosomal protein uS3 family. In terms of assembly, part of the 30S ribosomal subunit.

Its subcellular location is the plastid. The protein localises to the chloroplast. This Picea abies (Norway spruce) protein is Small ribosomal subunit protein uS3c (rps3).